Consider the following 304-residue polypeptide: Ferredoxin fas2 (304 aa).

Residues 2–29 form the 4Fe-4S ferredoxin-type domain; sequence KVVVNERRCFGSGQCVLVAPEVFEQSND. Positions 10, 16, and 54 each coordinate [3Fe-4S] cluster. The transketolase-like stretch occupies residues 66-304; it reads MRQEPTEFSY…QSARSSIQQR (239 aa).

The protein in the C-terminal section; belongs to the transketolase family. [3Fe-4S] cluster is required as a cofactor.

Functionally, plays a role in electron transfer. The fas operon encodes genes involved in cytokinin production and in host plant fasciation (leafy gall). The protein is Ferredoxin fas2 (fas2) of Rhodococcoides fascians (Rhodococcus fascians).